Consider the following 620-residue polypeptide: Glutathione-regulated potassium-efflux system protein KefC (620 aa).

A run of 12 helical transmembrane segments spans residues 4–24 (HTLI…PIAV), 26–46 (LGLG…PWGL), 54–74 (SILH…GLEL), 90–110 (GALQ…LLGL), 114–134 (VAEL…MQAM), 149–169 (FAVL…IPLL), 178–198 (MGAF…VVLL), 218–238 (VFSA…EEVG), 270–290 (GLLL…GTLL), 294–314 (LRIV…LWLI), 327–347 (WFAV…GAAQ), and 359–379 (SLTL…VILN). Residues 399-518 (QPRVIIAGFG…AGVEKPERET (120 aa)) enclose the RCK N-terminal domain. The disordered stretch occupies residues 597–620 (GWQGTEEGKHTGNMADEPETKPSS).

The protein belongs to the monovalent cation:proton antiporter 2 (CPA2) transporter (TC 2.A.37) family. KefC subfamily. In terms of assembly, homodimer. Interacts with the regulatory subunit KefF.

It localises to the cell inner membrane. In terms of biological role, pore-forming subunit of a potassium efflux system that confers protection against electrophiles. Catalyzes K(+)/H(+) antiport. The protein is Glutathione-regulated potassium-efflux system protein KefC of Escherichia coli O127:H6 (strain E2348/69 / EPEC).